We begin with the raw amino-acid sequence, 209 residues long: Large ribosomal subunit protein uL1 (209 aa).

This sequence belongs to the universal ribosomal protein uL1 family. In terms of assembly, part of the 50S ribosomal subunit.

In terms of biological role, binds directly to 23S rRNA. The L1 stalk is quite mobile in the ribosome, and is involved in E site tRNA release. Protein L1 is also a translational repressor protein, it controls the translation of the L11 operon by binding to its mRNA. This Neorickettsia sennetsu (strain ATCC VR-367 / Miyayama) (Ehrlichia sennetsu) protein is Large ribosomal subunit protein uL1 (rplA).